The chain runs to 2566 residues: Zinc finger protein GLI1 (2566 aa).

Disordered stretches follow at residues 349 to 375, 430 to 508, and 985 to 1046; these read HHSSGYVPNHTAPMLRGGKKRSHSQSS, DIRR…RSTG, and KSIE…GDPD. 2 stretches are compositionally biased toward polar residues: residues 434–444 and 457–492; these read TLSSNGNSSHT and WSPNSPHSSGSGFDNYQTSSHKSLPLPSTLQTYQQH. Over residues 493–508 the composition is skewed to low complexity; the sequence is SGYTSTSGSSGNRSTG. The segment covering 993-1016 has biased composition (polar residues); the sequence is WQNQNVFSSRRNSTRDPSNNNNSG. Positions 1023–1035 are enriched in acidic residues; that stretch reads DEPDVDDDEELDD. A C2H2-type 1; degenerate zinc finger spans residues 1088-1110; the sequence is RECVRGTRPFKAQYMLVVHMRRH. C2H2-type zinc fingers lie at residues 1116–1140, 1146–1171, and 1177–1202; these read HKCIFEGCIKRYSRLENLKTHLRSH, YQCEIPGCNKAFSNASDRAKHQNRTH, and YTCKVDGCSKRYTDPSSLRKHVKTVH. 5 disordered regions span residues 1254–1313, 1465–1491, 1650–1677, 1727–1791, and 2067–2091; these read GNSN…PRDS, LSTTSNPVQSLSPSIDNPINSTGTKQK, SKNMDNNSQTKNNNELNEENSPQSNQNE, AAAS…MDND, and MHFSPHSYVHSSSSNSSPFNSNRPH. 2 stretches are compositionally biased toward low complexity: residues 1661-1677 and 1727-1743; these read NNNELNEENSPQSNQNE and AAASSGIGSGVTTTTAS. Basic residues predominate over residues 1752–1769; that stretch reads NHHHQKQQPKHSHQHQNR. A compositionally biased stretch (polar residues) spans 1770 to 1791; sequence TKSINSDNNYSNQDNVSTMDND. Residues 2070–2090 are compositionally biased toward low complexity; sequence SPHSYVHSSSSNSSPFNSNRP.

This sequence belongs to the GLI C2H2-type zinc-finger protein family. In terms of tissue distribution, expressed in female-paired or unpaired males along the ventral surface in neurons and skin tegument cells. In virgin and mature females, expressed bilaterally along the edges of the body in neurons. In mature females, also expressed in skin tegument cells.

The protein localises to the nucleus. Probable transcription factor which plays an essential role in males to trigger female sexual development by inducing NRPS expression in male. NRPS produces the pheromone beta-alanyl-tryptamine (BATT), which stimulates female sexual development. The sequence is that of Zinc finger protein GLI1 from Schistosoma mansoni (Blood fluke).